The following is a 700-amino-acid chain: Ribonucleoside-diphosphate reductase subunit alpha (700 aa).

Residues T153, 169–170 (SC), G198, 380–384 (NLCSE), and 580–584 (PTGSI) contribute to the substrate site. An intrachain disulfide couples C170 to C409. N380 serves as the catalytic Proton acceptor. The active-site Cysteine radical intermediate is C382. E384 acts as the Proton acceptor in catalysis.

Belongs to the ribonucleoside diphosphate reductase large chain family. Tetramer of two alpha and two beta subunits.

It catalyses the reaction a 2'-deoxyribonucleoside 5'-diphosphate + [thioredoxin]-disulfide + H2O = a ribonucleoside 5'-diphosphate + [thioredoxin]-dithiol. Its activity is regulated as follows. Under complex allosteric control mediated by deoxynucleoside triphosphates and ATP binding. The type of nucleotide bound at the specificity site determines substrate preference. It seems probable that ATP makes the enzyme reduce CDP and UDP, dGTP favors ADP reduction and dTTP favors GDP reduction. Provides the precursors necessary for DNA synthesis. Catalyzes the biosynthesis of deoxyribonucleotides from the corresponding ribonucleotides. The sequence is that of Ribonucleoside-diphosphate reductase subunit alpha from Bacillus subtilis (strain 168).